The sequence spans 163 residues: Xanthine-guanine phosphoribosyltransferase (163 aa).

5-phospho-alpha-D-ribose 1-diphosphate-binding positions include 43-44 (RG) and 95-103 (DDLVDTGGT). A Mg(2+)-binding site is contributed by D96. 2 residues coordinate guanine: D99 and I142. Xanthine-binding residues include D99 and I142. GMP-binding positions include 99–103 (DTGGT) and 141–142 (WI).

It belongs to the purine/pyrimidine phosphoribosyltransferase family. XGPT subfamily. As to quaternary structure, homotetramer. Requires Mg(2+) as cofactor.

The protein resides in the cell inner membrane. The enzyme catalyses GMP + diphosphate = guanine + 5-phospho-alpha-D-ribose 1-diphosphate. It catalyses the reaction XMP + diphosphate = xanthine + 5-phospho-alpha-D-ribose 1-diphosphate. It carries out the reaction IMP + diphosphate = hypoxanthine + 5-phospho-alpha-D-ribose 1-diphosphate. It functions in the pathway purine metabolism; GMP biosynthesis via salvage pathway; GMP from guanine: step 1/1. Its pathway is purine metabolism; XMP biosynthesis via salvage pathway; XMP from xanthine: step 1/1. Purine salvage pathway enzyme that catalyzes the transfer of the ribosyl-5-phosphate group from 5-phospho-alpha-D-ribose 1-diphosphate (PRPP) to the N9 position of the 6-oxopurines guanine and xanthine to form the corresponding ribonucleotides GMP (guanosine 5'-monophosphate) and XMP (xanthosine 5'-monophosphate), with the release of PPi. To a lesser extent, also acts on hypoxanthine. The sequence is that of Xanthine-guanine phosphoribosyltransferase from Nitratidesulfovibrio vulgaris (strain DP4) (Desulfovibrio vulgaris).